The sequence spans 646 residues: MRARLISYNGTTMYDLLKTIDDPADLRRLDRRQLQPLADELRAFVLDSVSKTGGHLSSNLGTVELTIALHYVFNTPNDRIVWDVGHQTYPHKILTGRRDQMHSLRQYDGISGFPRRSESEYDTFGTAHSSTSISAALGMAIGSQLNGDDRFSIAVIGDGAMTAGMAFEAMNNAGVSEDAKLLVILNDNDMSISPPVGALNRHLARLMSGRFYAAARAGVERVLSVAPPVLELARKLEEHAKGMVVPATLFEEFGFNYIGPIDGHDLDSLIPTLQNIRELRGPQFLHVVTKKGQGYKLAEADPVLYHGPGKFNPAEGIKPSPTPAKKTYTQVFGEWLCDEAERDSRVVGITPAMREGSGMVEFEKRFKDRYYDVGIAEQHAVTFAGGLATEGLKPVVAIYSTFLQRAYDQLIHDVALQNLPVVFAIDRAGLVGADGATHAGAYDLAFMRCIPNMTIMAASDENECRQMLHTALQQPNPTAVRYPRGAGTGVATVKEFTEIPLGKGEVRRRTSQPEGKRVAILAFGTMVAPSLAAGEELDATVANMRFVKPIDAALVRELAETHDYLVTVEEGCVMGGAGSACVEALMESGVIRPVIQLGLPDQFIDHGDPAKLLAQCGLDGAGIAKSIRERFLSPAADVADQAKRVA.

Thiamine diphosphate contacts are provided by residues His86 and 127-129 (AHS). Mg(2+) is bound at residue Asp158. Thiamine diphosphate is bound by residues 159–160 (GA), Asn188, Tyr295, and Glu377. Residue Asn188 participates in Mg(2+) binding.

The protein belongs to the transketolase family. DXPS subfamily. As to quaternary structure, homodimer. Mg(2+) serves as cofactor. Thiamine diphosphate is required as a cofactor.

The enzyme catalyses D-glyceraldehyde 3-phosphate + pyruvate + H(+) = 1-deoxy-D-xylulose 5-phosphate + CO2. The protein operates within metabolic intermediate biosynthesis; 1-deoxy-D-xylulose 5-phosphate biosynthesis; 1-deoxy-D-xylulose 5-phosphate from D-glyceraldehyde 3-phosphate and pyruvate: step 1/1. Functionally, catalyzes the acyloin condensation reaction between C atoms 2 and 3 of pyruvate and glyceraldehyde 3-phosphate to yield 1-deoxy-D-xylulose-5-phosphate (DXP). The protein is 1-deoxy-D-xylulose-5-phosphate synthase of Burkholderia ambifaria (strain ATCC BAA-244 / DSM 16087 / CCUG 44356 / LMG 19182 / AMMD) (Burkholderia cepacia (strain AMMD)).